The primary structure comprises 131 residues: Hydrophilin PGA14 (131 aa).

Positions Met1–Ala18 are cleaved as a signal peptide. Basic and acidic residues-rich tracts occupy residues Tyr42–Thr59 and Lys79–Lys96. The disordered stretch occupies residues Tyr42–Gly110. Residues Asn97 and Asn101 are each glycosylated (N-linked (GlcNAc...) asparagine). Low complexity predominate over residues Asn97–Gly110. Ser105 carries the GPI-anchor amidated serine lipid modification. Residues Ser106–Ile131 constitute a propeptide, removed in mature form.

The protein belongs to the PGA14 family. In terms of processing, the GPI-anchor is attached to the protein in the endoplasmic reticulum and serves to target the protein to the cell surface. There, the glucosamine-inositol phospholipid moiety is cleaved off and the GPI-modified mannoprotein is covalently attached via its lipidless GPI glycan remnant to the 1,6-beta-glucan of the outer cell wall layer.

It is found in the secreted. Its subcellular location is the cell wall. The protein localises to the membrane. Functionally, hydrophilin which is essential to overcome the simple stress of the desiccation-rehydration process. The chain is Hydrophilin PGA14 (PGA14) from Candida albicans (strain SC5314 / ATCC MYA-2876) (Yeast).